The sequence spans 238 residues: Ribonuclease PH (238 aa).

Residues R86 and 124–126 (GTR) each bind phosphate.

It belongs to the RNase PH family. As to quaternary structure, homohexameric ring arranged as a trimer of dimers.

The catalysed reaction is tRNA(n+1) + phosphate = tRNA(n) + a ribonucleoside 5'-diphosphate. In terms of biological role, phosphorolytic 3'-5' exoribonuclease that plays an important role in tRNA 3'-end maturation. Removes nucleotide residues following the 3'-CCA terminus of tRNAs; can also add nucleotides to the ends of RNA molecules by using nucleoside diphosphates as substrates, but this may not be physiologically important. Probably plays a role in initiation of 16S rRNA degradation (leading to ribosome degradation) during starvation. The polypeptide is Ribonuclease PH (Psychrobacter arcticus (strain DSM 17307 / VKM B-2377 / 273-4)).